Here is a 390-residue protein sequence, read N- to C-terminus: Tuftelin (390 aa).

2 coiled-coil regions span residues 88–126 (DKMTHEKNIDQLKSEVQYIQEARNCLQKLREDISSKLDR) and 163–352 (PSMS…EKQV). The tract at residues 356–383 (NFSTQARAKTENLGSVRISKPPSPKPMP) is disordered.

This sequence belongs to the tuftelin family. In terms of assembly, interacts with TFIP11. May form oligomers. As to expression, ameloblasts, and also non-odontogenic tissues including kidney, lung, liver and testis.

It localises to the secreted. Its function is as follows. Involved in the structural organization of the epidermis. Involved in the mineralization and structural organization of enamel. The sequence is that of Tuftelin (Tuft1) from Mus musculus (Mouse).